Here is a 2068-residue protein sequence, read N- to C-terminus: Lipoxygenase homology domain-containing protein 1 (2068 aa).

PLAT domains are found at residues 43-160 (KVYE…RDLL), 172-287 (NKYE…RDIL), 296-412 (ITYI…RQLY), 425-540 (YPWS…REMT), 553-673 (ARYR…RELL), 684-803 (FRYH…VELY), 814-934 (VHYE…RELL), 970-1088 (TTFS…RDLF), 1101-1226 (VPYE…RELV), 1255-1373 (VLYS…RLFY), 1422-1540 (IPYY…RVFD), 1553-1668 (VLYE…CEIC), 1680-1798 (TSYT…RDFA), 1811-1932 (TTYE…VFEV), and 1949-2065 (VKYE…RELF).

As to expression, expressed in the inner ear, specifically in hair cells. Higher expression is detected in the cochlea.

The protein resides in the cell projection. Its subcellular location is the stereocilium. Functionally, required for normal function of hair cells in the inner ear. The chain is Lipoxygenase homology domain-containing protein 1 (Loxhd1) from Mus musculus (Mouse).